Reading from the N-terminus, the 457-residue chain is Exoenzyme T (457 aa).

The Bacterial Rho-GAP domain occupies 99-232; that stretch reads LSAAEIKQMM…LRHAVESEVK (134 aa). In terms of domain architecture, TR mART core spans 242–418; sequence DGLVEHFGLE…RVLEEATLGE (177 aa). Catalysis depends on residues arginine 322, serine 346, and glutamate 385.

Interacts with chaperone protein SpcS; this interaction maintains ExoT in a secretion competent state within the cytoplasm. Interacts with host YWHAB.

It is found in the secreted. The enzyme catalyses L-arginyl-[protein] + NAD(+) = N(omega)-(ADP-D-ribosyl)-L-arginyl-[protein] + nicotinamide + H(+). Functionally, bifunctional effector protein that is secreted and delivered by the type III secretion system into eukaryotic target cells. ADP-ribosylates several eukaryotic proteins including CT10 regulator of kinase (Crk) proteins. In turn, induces atypical anoikis apoptosis by transforming Crk adaptor protein into a cytotoxin. Affects host cell morphology by disrupting the actin cytoskeleton. In addition to this activity, acts via its N-terminal region as a GTPase-activating protein (GAP) for host Rho GTPases including RhoA, Rac1, Cdc42 and Ras. The bacterial Rho-GAP domain activity induces mitochondrial disruption in the target host cell by activating host caspases 3 and 9 that execute cellular death. This activity also causes stress fiber disassembly. The protein is Exoenzyme T (exoT) of Pseudomonas aeruginosa (strain ATCC 15692 / DSM 22644 / CIP 104116 / JCM 14847 / LMG 12228 / 1C / PRS 101 / PAO1).